Here is a 147-residue protein sequence, read N- to C-terminus: Cyanate hydratase (147 aa).

Residues Arg-88, Glu-91, and Ser-114 contribute to the active site.

Belongs to the cyanase family.

It catalyses the reaction cyanate + hydrogencarbonate + 3 H(+) = NH4(+) + 2 CO2. In terms of biological role, catalyzes the reaction of cyanate with bicarbonate to produce ammonia and carbon dioxide. The sequence is that of Cyanate hydratase from Thiobacillus denitrificans (strain ATCC 25259 / T1).